We begin with the raw amino-acid sequence, 96 residues long: Uteroglobin (96 aa).

The N-terminal stretch at 1–21 (MKIAITITVVMLSICCSSASS) is a signal peptide.

The protein belongs to the secretoglobin family. As to quaternary structure, antiparallel homodimer; disulfide-linked. Interaction with LMBR1L is controversial. As to expression, club cells (nonciliated cells of the surface epithelium of the pulmonary airways).

It is found in the secreted. Functionally, binds phosphatidylcholine, phosphatidylinositol, polychlorinated biphenyls (PCB) and weakly progesterone, potent inhibitor of phospholipase A2. This Mus musculus (Mouse) protein is Uteroglobin (Scgb1a1).